The primary structure comprises 116 residues: Iron-sulfur cluster insertion protein ErpA (116 aa).

The iron-sulfur cluster site is built by cysteine 44, cysteine 108, and cysteine 110.

This sequence belongs to the HesB/IscA family. Homodimer. Iron-sulfur cluster is required as a cofactor.

Its function is as follows. Required for insertion of 4Fe-4S clusters for at least IspG. The sequence is that of Iron-sulfur cluster insertion protein ErpA from Shewanella halifaxensis (strain HAW-EB4).